The following is a 210-amino-acid chain: Large ribosomal subunit protein bL25 (210 aa).

Belongs to the bacterial ribosomal protein bL25 family. CTC subfamily. As to quaternary structure, part of the 50S ribosomal subunit; part of the 5S rRNA/L5/L18/L25 subcomplex. Contacts the 5S rRNA. Binds to the 5S rRNA independently of L5 and L18.

In terms of biological role, this is one of the proteins that binds to the 5S RNA in the ribosome where it forms part of the central protuberance. This Saccharophagus degradans (strain 2-40 / ATCC 43961 / DSM 17024) protein is Large ribosomal subunit protein bL25.